A 461-amino-acid polypeptide reads, in one-letter code: Inositol-trisphosphate 3-kinase A (461 aa).

The interval 1–29 (MTLPGGPTGMARPGGARPCSPGLERAPRR) is disordered. The interval 1–133 (MTLPGGPTGM…SVSSTGSSSL (133 aa)) is required for cytoskeleton location. 3 positions are modified to omega-N-methylarginine: Arg-35, Arg-55, and Arg-62. The segment at 49–160 (AAAGEPRARG…GNVQLEAGED (112 aa)) is disordered. Over residues 118–134 (RRLSTSSVSSTGSSSLL) the composition is skewed to low complexity. Ser-137 and Ser-197 each carry phosphoserine. ATP-binding positions include Ser-197, Lys-209, 249–251 (QDL), and Asp-262. Substrate contacts are provided by Lys-264 and Arg-285. Residues 287–295 (DMYKKMLAV) form a calmodulin-binding region. 312 to 319 (KPRYMQWR) is a substrate binding site. ATP-binding residues include Lys-336 and Asp-416. Lys-419 lines the substrate pocket.

The protein belongs to the inositol phosphokinase (IPK) family. As to expression, expressed in brain.

It localises to the cytoplasm. It is found in the cytoskeleton. It carries out the reaction 1D-myo-inositol 1,4,5-trisphosphate + ATP = 1D-myo-inositol 1,3,4,5-tetrakisphosphate + ADP + H(+). Activated by calcium/calmodulin. Catalyzes the phosphorylation of 1D-myo-inositol 1,4,5-trisphosphate (InsP3) into 1D-myo-inositol 1,3,4,5-tetrakisphosphate and participates to the regulation of calcium homeostasis. The protein is Inositol-trisphosphate 3-kinase A of Homo sapiens (Human).